The sequence spans 145 residues: Immunoglobulin iota chain (145 aa).

An N-terminal signal peptide occupies residues 1 to 19 (MSWAPVLLMLFVYCTGCGP). The interval 20-41 (QPVLHQPPAMSSALGTTIRLTC) is framework-1. The Ig-like V-type domain occupies 20-132 (QPVLHQPPAM…EKEEREREWE (113 aa)). Cysteine 41 and cysteine 115 are oxidised to a cystine. The complementarity-determining-1 stretch occupies residues 42-56 (TLRNDHDIGVYSVYW). Residues 57–70 (YQQRPGHPPRFLLR) are framework-2. The tract at residues 71–81 (YFSQSDKSQGP) is complementarity-determining-2. The segment at 82–115 (QVPPRFSGSKDVARNRGYLSISELQPEDEAMYYC) is framework-3. The segment covering 121 to 130 (SSEKEERERE) has biased composition (basic and acidic residues). Residues 121-145 (SSEKEEREREWEEEMEPTAARTRVP) are disordered.

The protein belongs to the immunoglobulin superfamily. Interacts with IGLL1. Interacts with SYNV1/HRD1 (via N-terminus); this interaction leads to increased VPREB1 ubiquitination and degradation in pre-B cells, possibly through a lysosomal, not proteasomal, pathway. Only expressed by pre-B-cells.

It is found in the endoplasmic reticulum. Its function is as follows. Associates with the Ig-mu chain to form a molecular complex that is expressed on the surface of pre-B-cells. This complex presumably regulates Ig gene rearrangements in the early steps of B-cell differentiation. The polypeptide is Immunoglobulin iota chain (VPREB1) (Homo sapiens (Human)).